The primary structure comprises 96 residues: Putative pterin-4-alpha-carbinolamine dehydratase (96 aa).

The protein belongs to the pterin-4-alpha-carbinolamine dehydratase family.

It catalyses the reaction (4aS,6R)-4a-hydroxy-L-erythro-5,6,7,8-tetrahydrobiopterin = (6R)-L-erythro-6,7-dihydrobiopterin + H2O. The polypeptide is Putative pterin-4-alpha-carbinolamine dehydratase (Prochlorococcus marinus (strain MIT 9313)).